The following is a 137-amino-acid chain: Crustacean calcium-binding protein 23 (137 aa).

EF-hand domains follow at residues 27-48 (RDSS…FGLD), 62-97 (EKKA…KVVK), and 100-135 (ATEE…YSGL).

Monomer or disulfide-linked dimers.

Its function is as follows. Possibly acts as a regulatory protein and not as a calcium buffer or transport protein. The chain is Crustacean calcium-binding protein 23 from Homarus americanus (American lobster).